The following is a 149-amino-acid chain: MNIINITNKSNFRFMYKKEFLKIMDIIQEKFNFKKRISVDLLITDNKEVRENNLLYRNVDKETDVLSFPFGDPDFFDHLDFIPLGSIIISHEKIVAQALEFNHSKKREFCYLFTHSLLHLLGYDHKEEDEEKIMNQYTKEIVEKLNIYR.

Zn(2+) contacts are provided by histidine 115, histidine 119, and histidine 125.

The protein belongs to the endoribonuclease YbeY family. Zn(2+) is required as a cofactor.

It is found in the cytoplasm. In terms of biological role, single strand-specific metallo-endoribonuclease involved in late-stage 70S ribosome quality control and in maturation of the 3' terminus of the 16S rRNA. The chain is Endoribonuclease YbeY from Mycoplasmopsis pulmonis (strain UAB CTIP) (Mycoplasma pulmonis).